A 381-amino-acid polypeptide reads, in one-letter code: MKLIVAGGGTGGHLFPGIAVAEEFLSRDPANQVLFVGSERGIEARAIPRLGYQLELISAAGIRGKGSLAKLKGAAMMIYGYAQSRKILHRFQPDLVLGVGGYASLPMVMAARGMEIPRYIHEQNALPGMSNKVLSRVANKVFISLEESAKFFPKDCTLLTGNPLRKQILEMLTQTETENPPSIPPLLKGGSEPCEQRGFNLFIFGGSQGAHALNVALPQAVAQLSPKQQRLIKIIHQTGEADLQQVQAAYQANGLEADVRPFIDDMATAYRQADLIICRAGATTIAEVTALGKACLFVPFPHATDDHQRKNAEALLKKGACEMLVEQEIGGKGLSEAIARLMENRDALKLIGENAAALARLDAARVIVDQMLEGVQPCTET.

UDP-N-acetyl-alpha-D-glucosamine is bound by residues 10–12 (TGG), N124, R165, S207, I263, and Q308.

Belongs to the glycosyltransferase 28 family. MurG subfamily.

The protein localises to the cell inner membrane. The catalysed reaction is di-trans,octa-cis-undecaprenyl diphospho-N-acetyl-alpha-D-muramoyl-L-alanyl-D-glutamyl-meso-2,6-diaminopimeloyl-D-alanyl-D-alanine + UDP-N-acetyl-alpha-D-glucosamine = di-trans,octa-cis-undecaprenyl diphospho-[N-acetyl-alpha-D-glucosaminyl-(1-&gt;4)]-N-acetyl-alpha-D-muramoyl-L-alanyl-D-glutamyl-meso-2,6-diaminopimeloyl-D-alanyl-D-alanine + UDP + H(+). The protein operates within cell wall biogenesis; peptidoglycan biosynthesis. Its function is as follows. Cell wall formation. Catalyzes the transfer of a GlcNAc subunit on undecaprenyl-pyrophosphoryl-MurNAc-pentapeptide (lipid intermediate I) to form undecaprenyl-pyrophosphoryl-MurNAc-(pentapeptide)GlcNAc (lipid intermediate II). The protein is UDP-N-acetylglucosamine--N-acetylmuramyl-(pentapeptide) pyrophosphoryl-undecaprenol N-acetylglucosamine transferase of Trichlorobacter lovleyi (strain ATCC BAA-1151 / DSM 17278 / SZ) (Geobacter lovleyi).